The chain runs to 514 residues: ATP synthase subunit alpha (514 aa).

170–177 (GDRQIGKT) is a binding site for ATP.

This sequence belongs to the ATPase alpha/beta chains family. As to quaternary structure, F-type ATPases have 2 components, CF(1) - the catalytic core - and CF(0) - the membrane proton channel. CF(1) has five subunits: alpha(3), beta(3), gamma(1), delta(1), epsilon(1). CF(0) has three main subunits: a(1), b(2) and c(9-12). The alpha and beta chains form an alternating ring which encloses part of the gamma chain. CF(1) is attached to CF(0) by a central stalk formed by the gamma and epsilon chains, while a peripheral stalk is formed by the delta and b chains.

It is found in the cell inner membrane. The catalysed reaction is ATP + H2O + 4 H(+)(in) = ADP + phosphate + 5 H(+)(out). Its function is as follows. Produces ATP from ADP in the presence of a proton gradient across the membrane. The alpha chain is a regulatory subunit. The protein is ATP synthase subunit alpha of Pseudomonas aeruginosa (strain LESB58).